Here is a 435-residue protein sequence, read N- to C-terminus: NADH-ubiquinone oxidoreductase chain 4 (435 aa).

Helical transmembrane passes span 27–47 (VLTI…ELNG), 53–73 (FVMG…YLSS), 80–100 (ASFN…FSVS), 102–122 (FFLF…LIVG), 132–152 (AGGY…WGVS), 177–197 (LWWL…FHLW), 206–226 (PVAG…YGLL), 239–259 (VFFV…GLAC), 267–285 (CLVA…LGVL), 295–317 (AIII…NAIY), 324–344 (LLVM…MCFL), 372–394 (SXAF…LYLY), and 414–434 (LCDV…FMFM).

This sequence belongs to the complex I subunit 4 family.

It is found in the mitochondrion membrane. It catalyses the reaction a ubiquinone + NADH + 5 H(+)(in) = a ubiquinol + NAD(+) + 4 H(+)(out). In terms of biological role, core subunit of the mitochondrial membrane respiratory chain NADH dehydrogenase (Complex I) that is believed to belong to the minimal assembly required for catalysis. Complex I functions in the transfer of electrons from NADH to the respiratory chain. The immediate electron acceptor for the enzyme is believed to be ubiquinone. This Mytilus edulis (Blue mussel) protein is NADH-ubiquinone oxidoreductase chain 4 (ND4).